The chain runs to 376 residues: MKLRVLSLMVPALLVAGTAGAAEIYNKDGNKLDLYGKVDGLHYFSSNNGVDGDQSYMRFGLRGETQISDQLTGYGQWEYQANLNHAENQDNKNFTRYGFAGLKFGDYGSFDYGRNTGVLYDVAAYTDLQPEFDGMTYGADQFMFQRSSGLATYRNNDFFGLVDGLNFALQYQGKNGNGEETNNGRDVLGQNGEGYGMSMSYDMGYGISAAGAFFNSRRTSEQNGANGHQNIMGRGDKAEGYSGGLKYDANDVYLAVMFTQSYNAARFGSSDSSVYGYANKAQSFEAYAHYQFDFGLRPFVGYNQTKGKDLGRAGNGKDYGDQDLVKFVDLGATYFFNKNMSTYVDYKINLVDNNDFTDAAGINTDNVVAVGLVYQF.

The N-terminal stretch at 1 to 21 (MKLRVLSLMVPALLVAGTAGA) is a signal peptide.

The protein belongs to the Gram-negative porin family. In terms of assembly, homotrimer.

It localises to the cell outer membrane. Functionally, forms pores that allow passive diffusion of small molecules across the outer membrane. This is Outer membrane porin C (ompC) from Serratia marcescens.